A 201-amino-acid polypeptide reads, in one-letter code: Orotate phosphoribosyltransferase (201 aa).

A 5-phospho-alpha-D-ribose 1-diphosphate-binding site is contributed by 113-121; it reads EDIITTGKS. Residues threonine 117 and arginine 145 each coordinate orotate.

This sequence belongs to the purine/pyrimidine phosphoribosyltransferase family. PyrE subfamily. Homodimer. The cofactor is Mg(2+).

It catalyses the reaction orotidine 5'-phosphate + diphosphate = orotate + 5-phospho-alpha-D-ribose 1-diphosphate. The protein operates within pyrimidine metabolism; UMP biosynthesis via de novo pathway; UMP from orotate: step 1/2. Functionally, catalyzes the transfer of a ribosyl phosphate group from 5-phosphoribose 1-diphosphate to orotate, leading to the formation of orotidine monophosphate (OMP). This chain is Orotate phosphoribosyltransferase, found in Helicobacter pylori (strain G27).